The sequence spans 244 residues: Geranylgeranylglyceryl phosphate synthase (244 aa).

Residues aspartate 20 and serine 49 each contribute to the Mg(2+) site. Residues 169–175 (YLEAGSG), 200–201 (GG), and 222–223 (GT) contribute to the sn-glycerol 1-phosphate site.

The protein belongs to the GGGP/HepGP synthase family. Group II subfamily. Requires Mg(2+) as cofactor.

Its subcellular location is the cytoplasm. It carries out the reaction sn-glycerol 1-phosphate + (2E,6E,10E)-geranylgeranyl diphosphate = sn-3-O-(geranylgeranyl)glycerol 1-phosphate + diphosphate. It functions in the pathway membrane lipid metabolism; glycerophospholipid metabolism. Its function is as follows. Prenyltransferase that catalyzes the transfer of the geranylgeranyl moiety of geranylgeranyl diphosphate (GGPP) to the C3 hydroxyl of sn-glycerol-1-phosphate (G1P). This reaction is the first ether-bond-formation step in the biosynthesis of archaeal membrane lipids. In Korarchaeum cryptofilum (strain OPF8), this protein is Geranylgeranylglyceryl phosphate synthase.